We begin with the raw amino-acid sequence, 319 residues long: Pantothenate kinase (319 aa).

An ATP-binding site is contributed by 96–103 (GSVAVGKS).

This sequence belongs to the prokaryotic pantothenate kinase family.

It localises to the cytoplasm. It carries out the reaction (R)-pantothenate + ATP = (R)-4'-phosphopantothenate + ADP + H(+). The protein operates within cofactor biosynthesis; coenzyme A biosynthesis; CoA from (R)-pantothenate: step 1/5. This Bacillus velezensis (strain DSM 23117 / BGSC 10A6 / LMG 26770 / FZB42) (Bacillus amyloliquefaciens subsp. plantarum) protein is Pantothenate kinase.